The primary structure comprises 204 residues: Large ribosomal subunit protein eL15y (204 aa).

Positions 162-204 (RGLTSEGKKNRGLRGKGHNNHKNRPSRRATWKKNNSISLRRYR) are disordered. The segment covering 171–192 (NRGLRGKGHNNHKNRPSRRATW) has biased composition (basic residues). Positions 193-204 (KKNNSISLRRYR) are enriched in polar residues.

Belongs to the eukaryotic ribosomal protein eL15 family.

In Arabidopsis thaliana (Mouse-ear cress), this protein is Large ribosomal subunit protein eL15y (RPL15B).